The following is a 300-amino-acid chain: NAD kinase (300 aa).

Asp75 functions as the Proton acceptor in the catalytic mechanism. NAD(+) contacts are provided by residues 75 to 76, 149 to 150, Arg177, Asp179, 190 to 195, Ala214, and Gln248; these read DG, ND, and TAYALS.

It belongs to the NAD kinase family. Requires a divalent metal cation as cofactor.

It is found in the cytoplasm. It catalyses the reaction NAD(+) + ATP = ADP + NADP(+) + H(+). Involved in the regulation of the intracellular balance of NAD and NADP, and is a key enzyme in the biosynthesis of NADP. Catalyzes specifically the phosphorylation on 2'-hydroxyl of the adenosine moiety of NAD to yield NADP. This is NAD kinase from Burkholderia mallei (strain SAVP1).